The following is a 153-amino-acid chain: Large ribosomal subunit protein eL15 (153 aa).

Lys-32 is covalently cross-linked (Glycyl lysine isopeptide (Lys-Gly) (interchain with G-Cter in SUMO2)). Residues Ser-46 and Ser-49 each carry the phosphoserine modification. A disordered region spans residues 114–135; sequence TSAGRKSRGLGKGHKFHHTIGG. Residues 118 to 131 show a composition bias toward basic residues; the sequence is RKSRGLGKGHKFHH.

This sequence belongs to the eukaryotic ribosomal protein eL15 family. As to quaternary structure, component of the large ribosomal subunit. Interacts with IFIT1 (via TPR repeats 1-4).

The protein resides in the cytoplasm. In terms of biological role, component of the large ribosomal subunit. The ribosome is a large ribonucleoprotein complex responsible for the synthesis of proteins in the cell. The protein is Large ribosomal subunit protein eL15 (RPL15) of Sus scrofa (Pig).